Here is a 100-residue protein sequence, read N- to C-terminus: NADH-quinone oxidoreductase subunit K (100 aa).

3 helical membrane passes run 4–24, 28–48, and 60–80; these read YEYYVALSGLLMVLGFIGVIV, IIAMLISTELMLNAVNVAFVA, and VFVFFILTIAAAEAAIGLGLI.

It belongs to the complex I subunit 4L family. As to quaternary structure, NDH-1 is composed of 14 different subunits. Subunits NuoA, H, J, K, L, M, N constitute the membrane sector of the complex.

The protein localises to the cell inner membrane. The catalysed reaction is a quinone + NADH + 5 H(+)(in) = a quinol + NAD(+) + 4 H(+)(out). Its function is as follows. NDH-1 shuttles electrons from NADH, via FMN and iron-sulfur (Fe-S) centers, to quinones in the respiratory chain. The immediate electron acceptor for the enzyme in this species is believed to be ubiquinone. Couples the redox reaction to proton translocation (for every two electrons transferred, four hydrogen ions are translocated across the cytoplasmic membrane), and thus conserves the redox energy in a proton gradient. This is NADH-quinone oxidoreductase subunit K from Sulfurihydrogenibium azorense (strain DSM 15241 / OCM 825 / Az-Fu1).